Consider the following 137-residue polypeptide: Allergen Ste b 1 (137 aa).

An N-terminal signal peptide occupies residues A1–Q18. Residues Q28 to S137 form the AA1-like domain. Disulfide bonds link C67-C82 and C121-C133.

This sequence belongs to the ALTA1 family. Homodimer; disulfide-linked.

The protein localises to the secreted. The chain is Allergen Ste b 1 (alta1) from Stemphylium botryosum (Black stalk rot fungus).